The following is a 124-amino-acid chain: Large ribosomal subunit protein bL12 (124 aa).

It belongs to the bacterial ribosomal protein bL12 family. As to quaternary structure, homodimer. Part of the ribosomal stalk of the 50S ribosomal subunit. Forms a multimeric L10(L12)X complex, where L10 forms an elongated spine to which 2 to 4 L12 dimers bind in a sequential fashion. Binds GTP-bound translation factors.

Functionally, forms part of the ribosomal stalk which helps the ribosome interact with GTP-bound translation factors. Is thus essential for accurate translation. In Pelodictyon phaeoclathratiforme (strain DSM 5477 / BU-1), this protein is Large ribosomal subunit protein bL12.